A 414-amino-acid polypeptide reads, in one-letter code: Putative truncated GMC-type inactive oxidoreductase R832 (414 aa).

The N-terminal stretch at 1 to 20 (MNPTKLFLVFVAFAFAIINA) is a signal peptide. 38–67 (DYIIVGSGPGGSRAVQQCIAKGHKCTLVER) serves as a coordination point for FAD.

The protein belongs to the GMC oxidoreductase family. It depends on FAD as a cofactor.

This chain is Putative truncated GMC-type inactive oxidoreductase R832, found in Acanthamoeba polyphaga (Amoeba).